A 949-amino-acid polypeptide reads, in one-letter code: Glycine dehydrogenase (decarboxylating) (949 aa).

Lysine 704 carries the N6-(pyridoxal phosphate)lysine modification.

The protein belongs to the GcvP family. The glycine cleavage system is composed of four proteins: P, T, L and H. It depends on pyridoxal 5'-phosphate as a cofactor.

The enzyme catalyses N(6)-[(R)-lipoyl]-L-lysyl-[glycine-cleavage complex H protein] + glycine + H(+) = N(6)-[(R)-S(8)-aminomethyldihydrolipoyl]-L-lysyl-[glycine-cleavage complex H protein] + CO2. The glycine cleavage system catalyzes the degradation of glycine. The P protein binds the alpha-amino group of glycine through its pyridoxal phosphate cofactor; CO(2) is released and the remaining methylamine moiety is then transferred to the lipoamide cofactor of the H protein. The polypeptide is Glycine dehydrogenase (decarboxylating) (Bacteroides thetaiotaomicron (strain ATCC 29148 / DSM 2079 / JCM 5827 / CCUG 10774 / NCTC 10582 / VPI-5482 / E50)).